The chain runs to 202 residues: Large ribosomal subunit protein bL25 (202 aa).

This sequence belongs to the bacterial ribosomal protein bL25 family. CTC subfamily. Part of the 50S ribosomal subunit; part of the 5S rRNA/L5/L18/L25 subcomplex. Contacts the 5S rRNA. Binds to the 5S rRNA independently of L5 and L18.

Functionally, this is one of the proteins that binds to the 5S RNA in the ribosome where it forms part of the central protuberance. The sequence is that of Large ribosomal subunit protein bL25 from Clostridium perfringens (strain ATCC 13124 / DSM 756 / JCM 1290 / NCIMB 6125 / NCTC 8237 / Type A).